Reading from the N-terminus, the 549-residue chain is MDVVEVAGSWWAQEREDIIMKYEKGHRAGLPEDKGPKPFRSYNNNVDHLGIVHETELPPLTAREAKQIRREISRKSKWVDMLGDWEKYKSSRKLIDRAYKGMPMNIRGPMWSVLLNIEEMKLKNPGRYQIMKEKGKRSSEHIQRIDRDISGTLRKHMFFRDRYGTKQRELLHILLAYEEYNPEVGYCRDLSHIAALFLLYLPEEDAFWALVQLLASERHSLQGFHSPNGGTVQGLQDQQEHVVATSQSKTMGHQDKKDLCGQCSPLGCLIRILIDGISLGLTLRLWDVYLVEGEQALMPITRIAFKVQQKRLTKTSRCGPWARFCNRFVDTWARDEDTVLKHLRASMKKLTRKQGDLPPPAKPEQGSSASRPVPASRGRKTLCKGDRQAPPGPPARFPRPIWSASPPRAPRSSTPCPGGAVREDTYPVGTQGVPSPALAQGGPQGSWRFLQWNSMPRLPTDLDVEGPWFRHYDFRQSCWVRAISQEDQLAPCWQAEHPAERVRSAFAAPSTDSDQGTPFRARDEQQCAPTSGPCLCGLHLESSQFPPGF.

In terms of domain architecture, Rab-GAP TBC spans G101–G293. S-palmitoyl cysteine attachment occurs at residues C318 and C325. Residues L350 to Y426 form a disordered region. A compositionally biased stretch (low complexity) spans P398 to P417.

In terms of processing, ubiquitinated by a CUL7-based E3 ligase, which leads to proteasomal degradation. Palmitoylation is required for membrane localization and protects TBC1D3 from ubiquitination.

It localises to the cell membrane. Functionally, acts as a GTPase activating protein for RAB5. Does not act on RAB4 or RAB11. The chain is TBC1 domain family member 3B (TBC1D3B) from Homo sapiens (Human).